A 197-amino-acid polypeptide reads, in one-letter code: Putative manganese efflux pump MntP 1 (197 aa).

A run of 6 helical transmembrane segments spans residues 8–28, 43–63, 66–86, 123–143, 146–166, and 176–196; these read VILL…GLGA, VYAA…GYLL, VLLG…LILL, LAIA…LLAL, WLAC…GIYL, and DKAE…VMFI.

Belongs to the MntP (TC 9.B.29) family.

The protein localises to the cell inner membrane. Functionally, probably functions as a manganese efflux pump. This is Putative manganese efflux pump MntP 1 from Psychrobacter cryohalolentis (strain ATCC BAA-1226 / DSM 17306 / VKM B-2378 / K5).